The chain runs to 331 residues: GTP 3',8-cyclase (331 aa).

Residues 1–231 (MNAVDYLRIS…DGQVQGNGPA (231 aa)) form the Radical SAM core domain. Arg8 contacts GTP. Residues Cys15 and Cys19 each contribute to the [4Fe-4S] cluster site. Tyr21 lines the S-adenosyl-L-methionine pocket. Cys22 contributes to the [4Fe-4S] cluster binding site. Arg60 contacts GTP. Residue Gly64 coordinates S-adenosyl-L-methionine. Residue Thr91 participates in GTP binding. Ser115 contributes to the S-adenosyl-L-methionine binding site. Residue Lys157 participates in GTP binding. S-adenosyl-L-methionine is bound at residue Met191. [4Fe-4S] cluster-binding residues include Cys254 and Cys257. 259-261 (RMR) is a binding site for GTP. Cys271 provides a ligand contact to [4Fe-4S] cluster.

The protein belongs to the radical SAM superfamily. MoaA family. As to quaternary structure, monomer and homodimer. [4Fe-4S] cluster is required as a cofactor.

The enzyme catalyses GTP + AH2 + S-adenosyl-L-methionine = (8S)-3',8-cyclo-7,8-dihydroguanosine 5'-triphosphate + 5'-deoxyadenosine + L-methionine + A + H(+). Its pathway is cofactor biosynthesis; molybdopterin biosynthesis. Functionally, catalyzes the cyclization of GTP to (8S)-3',8-cyclo-7,8-dihydroguanosine 5'-triphosphate. This Acaryochloris marina (strain MBIC 11017) protein is GTP 3',8-cyclase.